The chain runs to 219 residues: Elongation factor Ts (219 aa).

The tract at residues 82-85 is involved in Mg(2+) ion dislocation from EF-Tu; the sequence is TDFV.

The protein belongs to the EF-Ts family.

The protein localises to the cytoplasm. Associates with the EF-Tu.GDP complex and induces the exchange of GDP to GTP. It remains bound to the aminoacyl-tRNA.EF-Tu.GTP complex up to the GTP hydrolysis stage on the ribosome. This is Elongation factor Ts from Synechococcus sp. (strain CC9902).